Consider the following 246-residue polypeptide: Ubiquinone biosynthesis O-methyltransferase (246 aa).

4 residues coordinate S-adenosyl-L-methionine: Arg36, Gly60, Asp81, and Leu123.

Belongs to the methyltransferase superfamily. UbiG/COQ3 family.

The catalysed reaction is a 3-demethylubiquinol + S-adenosyl-L-methionine = a ubiquinol + S-adenosyl-L-homocysteine + H(+). It carries out the reaction a 3-(all-trans-polyprenyl)benzene-1,2-diol + S-adenosyl-L-methionine = a 2-methoxy-6-(all-trans-polyprenyl)phenol + S-adenosyl-L-homocysteine + H(+). The protein operates within cofactor biosynthesis; ubiquinone biosynthesis. Functionally, O-methyltransferase that catalyzes the 2 O-methylation steps in the ubiquinone biosynthetic pathway. The polypeptide is Ubiquinone biosynthesis O-methyltransferase (Rickettsia typhi (strain ATCC VR-144 / Wilmington)).